The chain runs to 351 residues: Heat-inducible transcription repressor HrcA (351 aa).

Belongs to the HrcA family.

Its function is as follows. Negative regulator of class I heat shock genes (grpE-dnaK-dnaJ and groELS operons). Prevents heat-shock induction of these operons. The sequence is that of Heat-inducible transcription repressor HrcA from Beutenbergia cavernae (strain ATCC BAA-8 / DSM 12333 / CCUG 43141 / JCM 11478 / NBRC 16432 / NCIMB 13614 / HKI 0122).